The following is a 169-amino-acid chain: Major pepsin inhibitor 3 (169 aa).

The signal sequence occupies residues 1–20 (MHVWLILSLASLWTSSIAYS). Q21 carries the pyrrolidone carboxylic acid modification. Disulfide bonds link C33-C79, C68-C86, and C99-C166. The disordered stretch occupies residues 135-169 (EEQQENQPPSSGMPHGAVPAGGLSPPPPPSFCTVQ). Positions 158-169 (SPPPPPSFCTVQ) are enriched in pro residues.

The protein belongs to the protease inhibitor I33 family. In terms of tissue distribution, body wall.

The protein resides in the secreted. Its function is as follows. This is an inhibitor of the aspartic protease pepsin. The sequence is that of Major pepsin inhibitor 3 from Ascaris suum (Pig roundworm).